The chain runs to 197 residues: Probable GTP-binding protein EngB (197 aa).

The region spanning 22–195 (NLPEIAFVGR…VDYLFDDLVE (174 aa)) is the EngB-type G domain. Residues 30 to 37 (GRSNVGKS), 57 to 61 (GKTRL), 75 to 78 (DLPG), 142 to 145 (TKSD), and 174 to 176 (FSS) each bind GTP. Residues S37 and T59 each coordinate Mg(2+).

The protein belongs to the TRAFAC class TrmE-Era-EngA-EngB-Septin-like GTPase superfamily. EngB GTPase family. Mg(2+) is required as a cofactor.

In terms of biological role, necessary for normal cell division and for the maintenance of normal septation. This is Probable GTP-binding protein EngB from Clostridium perfringens (strain 13 / Type A).